Reading from the N-terminus, the 156-residue chain is ATP synthase subunit b (156 aa).

A helical transmembrane segment spans residues 11–31; sequence AIAFVLFVMFCMKFVWPPIMA.

Belongs to the ATPase B chain family. In terms of assembly, F-type ATPases have 2 components, F(1) - the catalytic core - and F(0) - the membrane proton channel. F(1) has five subunits: alpha(3), beta(3), gamma(1), delta(1), epsilon(1). F(0) has three main subunits: a(1), b(2) and c(10-14). The alpha and beta chains form an alternating ring which encloses part of the gamma chain. F(1) is attached to F(0) by a central stalk formed by the gamma and epsilon chains, while a peripheral stalk is formed by the delta and b chains.

It localises to the cell inner membrane. Functionally, f(1)F(0) ATP synthase produces ATP from ADP in the presence of a proton or sodium gradient. F-type ATPases consist of two structural domains, F(1) containing the extramembraneous catalytic core and F(0) containing the membrane proton channel, linked together by a central stalk and a peripheral stalk. During catalysis, ATP synthesis in the catalytic domain of F(1) is coupled via a rotary mechanism of the central stalk subunits to proton translocation. Component of the F(0) channel, it forms part of the peripheral stalk, linking F(1) to F(0). The chain is ATP synthase subunit b from Photorhabdus laumondii subsp. laumondii (strain DSM 15139 / CIP 105565 / TT01) (Photorhabdus luminescens subsp. laumondii).